A 375-amino-acid chain; its full sequence is 23S rRNA (uracil(747)-C(5))-methyltransferase RlmC (375 aa).

[4Fe-4S] cluster-binding residues include Cys-3, Cys-11, Cys-14, and Cys-87. Positions 212, 241, 262, and 307 each coordinate S-adenosyl-L-methionine. Cys-334 (nucleophile) is an active-site residue.

The protein belongs to the class I-like SAM-binding methyltransferase superfamily. RNA M5U methyltransferase family. RlmC subfamily.

The catalysed reaction is uridine(747) in 23S rRNA + S-adenosyl-L-methionine = 5-methyluridine(747) in 23S rRNA + S-adenosyl-L-homocysteine + H(+). In terms of biological role, catalyzes the formation of 5-methyl-uridine at position 747 (m5U747) in 23S rRNA. This Xenorhabdus nematophila (strain ATCC 19061 / DSM 3370 / CCUG 14189 / LMG 1036 / NCIMB 9965 / AN6) protein is 23S rRNA (uracil(747)-C(5))-methyltransferase RlmC.